Here is a 283-residue protein sequence, read N- to C-terminus: Tyrosine recombinase THA_404 (283 aa).

One can recognise a Core-binding (CB) domain in the interval 1–86 (MDKVIEMFSD…SLNSFFNYLE (86 aa)). Residues 107-281 (KIPDFLTEDE…ADQEKFDAVK (175 aa)) form the Tyr recombinase domain. Active-site residues include Arg145, Lys170, His233, Arg236, and His259. The active-site O-(3'-phospho-DNA)-tyrosine intermediate is the Tyr268.

Belongs to the 'phage' integrase family.

The protein resides in the cytoplasm. Its function is as follows. Site-specific tyrosine recombinase, which acts by catalyzing the cutting and rejoining of the recombining DNA molecules. The protein is Tyrosine recombinase THA_404 of Thermosipho africanus (strain TCF52B).